A 390-amino-acid chain; its full sequence is Matrix metalloproteinase-23 (390 aa).

Topologically, residues 1-19 (MGRGARVPSEAPGAGVERR) are cytoplasmic. Positions 1-78 (MGRGARVPSE…PGPLAPRRRR (78 aa)) are excised as a propeptide. The chain crosses the membrane as a helical; Signal-anchor for type II membrane protein span at residues 20 to 40 (WLGAALVALCLLPALVLLARL). The Lumenal portion of the chain corresponds to 41-390 (GAPAVPAWSA…TYSWRVRVRG (350 aa)). Asparagine 92 and asparagine 148 each carry an N-linked (GlcNAc...) asparagine glycan. Residue histidine 211 participates in Zn(2+) binding. The active site involves glutamate 212. Residues histidine 215 and histidine 221 each coordinate Zn(2+). Asparagine 232 is a glycosylation site (N-linked (GlcNAc...) asparagine). The region spanning 255–289 (CLDRLFVCASWARRGFCDARRRLMKRLCPSSCDFC) is the ShKT domain. 3 disulfides stabilise this stretch: cysteine 255–cysteine 289, cysteine 262–cysteine 282, and cysteine 271–cysteine 286. Residues 295 to 380 (PTVATTPPPP…VVRRQQRVLT (86 aa)) form the Ig-like C2-type domain. A glycan (N-linked (GlcNAc...) asparagine) is linked at asparagine 316. Residues cysteine 321 and cysteine 370 are joined by a disulfide bond.

This sequence belongs to the peptidase M10A family. It depends on Zn(2+) as a cofactor. Post-translationally, N-glycosylated. In terms of processing, proteolytic cleavage might yield an active form. As to expression, predominantly expressed in ovary, testis and prostate.

The protein localises to the endoplasmic reticulum membrane. The protein resides in the membrane. Inhibited by TIMP2. Functionally, protease. May regulate the surface expression of some potassium channels by retaining them in the endoplasmic reticulum. The chain is Matrix metalloproteinase-23 (MMP23B) from Homo sapiens (Human).